A 126-amino-acid chain; its full sequence is Large ribosomal subunit protein bL12 (126 aa).

Belongs to the bacterial ribosomal protein bL12 family. As to quaternary structure, homodimer. Part of the ribosomal stalk of the 50S ribosomal subunit. Forms a multimeric L10(L12)X complex, where L10 forms an elongated spine to which 2 to 4 L12 dimers bind in a sequential fashion. Binds GTP-bound translation factors.

Functionally, forms part of the ribosomal stalk which helps the ribosome interact with GTP-bound translation factors. Is thus essential for accurate translation. This chain is Large ribosomal subunit protein bL12, found in Acidobacterium capsulatum (strain ATCC 51196 / DSM 11244 / BCRC 80197 / JCM 7670 / NBRC 15755 / NCIMB 13165 / 161).